The primary structure comprises 237 residues: Glutathione S-transferase L1 (237 aa).

A GST N-terminal domain is found at 29-110 (GTTRLYISYT…YVDSNFDGPS (82 aa)). Residues 39-40 (CP), 67-68 (NR), 81-82 (KV), and 94-95 (ES) contribute to the glutathione site. Residues 112–232 (YPEDSAKREF…KTDSEYVVNY (121 aa)) enclose the GST C-terminal domain.

The protein belongs to the GST superfamily. Lambda family.

The protein resides in the cytoplasm. It is found in the cytosol. The enzyme catalyses RX + glutathione = an S-substituted glutathione + a halide anion + H(+). Catalyzes the glutathione-dependent reduction of S-glutathionylquercetin to quercetin. In vitro, possesses glutathione-dependent thiol transferase activity toward 2-hydroxyethyl disulfide (HED). The protein is Glutathione S-transferase L1 (GSTL1) of Arabidopsis thaliana (Mouse-ear cress).